Here is a 172-residue protein sequence, read N- to C-terminus: Large ribosomal subunit protein uL10 (172 aa).

The protein belongs to the universal ribosomal protein uL10 family. As to quaternary structure, part of the ribosomal stalk of the 50S ribosomal subunit. The N-terminus interacts with L11 and the large rRNA to form the base of the stalk. The C-terminus forms an elongated spine to which L12 dimers bind in a sequential fashion forming a multimeric L10(L12)X complex.

Functionally, forms part of the ribosomal stalk, playing a central role in the interaction of the ribosome with GTP-bound translation factors. This is Large ribosomal subunit protein uL10 from Nitrobacter hamburgensis (strain DSM 10229 / NCIMB 13809 / X14).